The primary structure comprises 205 residues: Nascent polypeptide-associated complex subunit alpha-like protein (205 aa).

2 disordered regions span residues 1 to 73 (MPSV…RKAM) and 137 to 166 (KAPNLSHVTMKPESSTAAQEDEDEVDDTGV). The segment covering 20–29 (EQQELEHSDE) has biased composition (basic and acidic residues). Residues 30 to 51 (PILEDDEDDDDEEDDNDEDDAQ) are compositionally biased toward acidic residues. The segment covering 56 to 66 (GEGKSKQSRSE) has biased composition (basic and acidic residues). The region spanning 63–128 (SRSEKKCRKA…AKIEDLSSQL (66 aa)) is the NAC-A/B domain. Residues 155-165 (QEDEDEVDDTG) are compositionally biased toward acidic residues. A UBA domain is found at 166–203 (VEPKDIELVMTQAGVSRTKAVKALKAADGDIVSAIMDL).

Belongs to the NAC-alpha family.

Its function is as follows. May promote appropriate targeting of ribosome-nascent polypeptide complexes. This Pinus taeda (Loblolly pine) protein is Nascent polypeptide-associated complex subunit alpha-like protein.